A 545-amino-acid polypeptide reads, in one-letter code: CTP synthase (545 aa).

Residues 1–265 form an amidoligase domain region; sequence MSKYIFVTGG…DDLVVQNLGL (265 aa). Position 13 (Ser13) interacts with CTP. Ser13 contributes to the UTP binding site. ATP-binding positions include 14–19 and Asp71; that span reads SLGKGA. Asp71 and Glu139 together coordinate Mg(2+). CTP-binding positions include 146 to 148, 186 to 191, and Lys222; these read DIE and KTKPTQ. Residues 186-191 and Lys222 each bind UTP; that span reads KTKPTQ. The 252-residue stretch at 290-541 folds into the Glutamine amidotransferase type-1 domain; that stretch reads VIALVGKYVG…MRAAIAQRER (252 aa). An L-glutamine-binding site is contributed by Gly351. Cys378 (nucleophile; for glutamine hydrolysis) is an active-site residue. Residues 379 to 382, Glu402, and Arg469 each bind L-glutamine; that span reads LGMQ. Active-site residues include His514 and Glu516.

This sequence belongs to the CTP synthase family. Homotetramer.

It catalyses the reaction UTP + L-glutamine + ATP + H2O = CTP + L-glutamate + ADP + phosphate + 2 H(+). It carries out the reaction L-glutamine + H2O = L-glutamate + NH4(+). The catalysed reaction is UTP + NH4(+) + ATP = CTP + ADP + phosphate + 2 H(+). Its pathway is pyrimidine metabolism; CTP biosynthesis via de novo pathway; CTP from UDP: step 2/2. Its activity is regulated as follows. Allosterically activated by GTP, when glutamine is the substrate; GTP has no effect on the reaction when ammonia is the substrate. The allosteric effector GTP functions by stabilizing the protein conformation that binds the tetrahedral intermediate(s) formed during glutamine hydrolysis. Inhibited by the product CTP, via allosteric rather than competitive inhibition. Its function is as follows. Catalyzes the ATP-dependent amination of UTP to CTP with either L-glutamine or ammonia as the source of nitrogen. Regulates intracellular CTP levels through interactions with the four ribonucleotide triphosphates. This chain is CTP synthase, found in Acidithiobacillus ferrooxidans (strain ATCC 23270 / DSM 14882 / CIP 104768 / NCIMB 8455) (Ferrobacillus ferrooxidans (strain ATCC 23270)).